Here is a 178-residue protein sequence, read N- to C-terminus: SPbeta prophage-derived uncharacterized protein YonC (178 aa).

The polypeptide is SPbeta prophage-derived uncharacterized protein YonC (yonC) (Bacillus subtilis (strain 168)).